The following is a 682-amino-acid chain: Zinc finger protein 16 (682 aa).

The segment covering 1–10 (MPSLRTRREE) has biased composition (basic and acidic residues). Positions 1–43 (MPSLRTRREEAEMELSVPGPSPWTPAAQARVRDAPAVTHPGSA) are disordered. The necessary for transcription activation stretch occupies residues 62-210 (YQQPDCDTRT…GVPTAESPLI (149 aa)). The C2H2-type 1; degenerate zinc-finger motif lies at 209-231 (LICNECGKTFQGNPDLIQRQIVH). The C2H2-type 2; degenerate zinc finger occupies 237 to 259 (FMCDDCGKTFSQNSVLKNRHRSH). K253 participates in a covalent cross-link: Glycyl lysine isopeptide (Lys-Gly) (interchain with G-Cter in SUMO2). C2H2-type zinc fingers lie at residues 265-287 (YQCS…QSHH), 293-315 (YMCN…QKSH), 321-343 (YECN…QRIH), 349-371 (YVCS…HRTH), 377-399 (FECG…QRVH), 405-427 (YECN…HRVH), 433-455 (YKCS…RRIH), and 461-483 (HVCN…QIIH). Required for nuclear localization stretches follow at residues 268–393 (SECG…AHLR) and 341–373 (RIHS…THTG). Positions 473–503 (SSVLRKHQIIHTGEKPYRCSVCGKAFSHSSA) are required for nuclear localization. Position 487 is an N6-acetyllysine (K487). 7 consecutive C2H2-type zinc fingers follow at residues 489 to 511 (YRCS…QGVH), 517 to 539 (YACH…QRVH), 545 to 567 (YECT…QRIH), 573 to 595 (HECN…QKVH), 601 to 623 (YTCV…QIIH), 629 to 651 (YKCS…QRIH), and 657 to 679 (YDCA…QLIH).

It belongs to the krueppel C2H2-type zinc-finger protein family. In terms of assembly, interacts with INCA1; the interaction inhibits INCA1 activity and induces the cell cycle process. Ubiquitous.

The protein localises to the nucleus. Acts as a transcriptional activator. Promotes cell proliferation by facilitating the cell cycle phase transition from the S to G2/M phase. Involved in both the hemin- and phorbol myristate acetate (PMA)-induced erythroid and megakaryocytic differentiation, respectively. Also plays a role as an inhibitor of cell apoptosis. The chain is Zinc finger protein 16 (ZNF16) from Homo sapiens (Human).